Reading from the N-terminus, the 277-residue chain is Pantothenate synthetase (277 aa).

28–35 (MGALHSGH) provides a ligand contact to ATP. The active-site Proton donor is the His35. Gln59 is a (R)-pantoate binding site. Gln59 is a binding site for beta-alanine. ATP-binding positions include 145–148 (GEKD), Val174, and 182–185 (LSSR).

The protein belongs to the pantothenate synthetase family. Homodimer.

It is found in the cytoplasm. It catalyses the reaction (R)-pantoate + beta-alanine + ATP = (R)-pantothenate + AMP + diphosphate + H(+). Its pathway is cofactor biosynthesis; (R)-pantothenate biosynthesis; (R)-pantothenate from (R)-pantoate and beta-alanine: step 1/1. In terms of biological role, catalyzes the condensation of pantoate with beta-alanine in an ATP-dependent reaction via a pantoyl-adenylate intermediate. In Anaplasma marginale (strain St. Maries), this protein is Pantothenate synthetase.